We begin with the raw amino-acid sequence, 577 residues long: Proline--tRNA ligase (577 aa).

It belongs to the class-II aminoacyl-tRNA synthetase family. ProS type 1 subfamily. Homodimer.

The protein resides in the cytoplasm. It catalyses the reaction tRNA(Pro) + L-proline + ATP = L-prolyl-tRNA(Pro) + AMP + diphosphate. Catalyzes the attachment of proline to tRNA(Pro) in a two-step reaction: proline is first activated by ATP to form Pro-AMP and then transferred to the acceptor end of tRNA(Pro). As ProRS can inadvertently accommodate and process non-cognate amino acids such as alanine and cysteine, to avoid such errors it has two additional distinct editing activities against alanine. One activity is designated as 'pretransfer' editing and involves the tRNA(Pro)-independent hydrolysis of activated Ala-AMP. The other activity is designated 'posttransfer' editing and involves deacylation of mischarged Ala-tRNA(Pro). The misacylated Cys-tRNA(Pro) is not edited by ProRS. This is Proline--tRNA ligase from Helicobacter pylori (strain HPAG1).